A 1036-amino-acid polypeptide reads, in one-letter code: Chitin synthase 1 (1036 aa).

The span at 1–10 shows a compositional bias: pro residues; that stretch reads MDGPPSPTRV. The interval 1 to 153 is disordered; sequence MDGPPSPTRV…RRPLPPAPLF (153 aa). N-linked (GlcNAc...) asparagine glycosylation occurs at Asn38. Low complexity predominate over residues 86 to 108; it reads PSIPLSSSNPRSPIRPSTPSRVS. The N-linked (GlcNAc...) asparagine glycan is linked to Asn179. The interval 189–229 is disordered; it reads RASLKSAHSYTTDSTFTEDDDITNEKLNHYGPAPEGRQDRR. Positions 194–203 are enriched in polar residues; the sequence is SAHSYTTDST. The next 7 helical transmembrane spans lie at 659–679, 699–719, 733–753, 776–796, 808–828, 908–928, and 945–967; these read FISL…FYFV, IFVI…ILSL, TMVT…YIVI, IFTN…LMSF, SAQY…YAFC, YVVA…SEAY, and WSVA…INIV. The tract at residues 994–1019 is disordered; that stretch reads AGLGSGFSESGKTGITSGSGMSGMSL. Residues 1001–1019 are compositionally biased toward low complexity; that stretch reads SESGKTGITSGSGMSGMSL.

This sequence belongs to the chitin synthase family. Class II subfamily.

It localises to the cell membrane. The catalysed reaction is [(1-&gt;4)-N-acetyl-beta-D-glucosaminyl](n) + UDP-N-acetyl-alpha-D-glucosamine = [(1-&gt;4)-N-acetyl-beta-D-glucosaminyl](n+1) + UDP + H(+). In terms of biological role, polymerizes chitin, a structural polymer of the cell wall and septum, by transferring the sugar moiety of UDP-GlcNAc to the non-reducing end of the growing chitin polymer. CHS1 mainly responsible for normal yeast cell reproductive growth. In Exophiala dermatitidis (strain ATCC 34100 / CBS 525.76 / NIH/UT8656) (Black yeast), this protein is Chitin synthase 1.